The following is a 276-amino-acid chain: Digeranylgeranylglyceryl phosphate synthase (276 aa).

Transmembrane regions (helical) follow at residues 14–34 (NCIL…GHFP), 40–60 (LLIF…NDYF), 92–112 (FAVG…LGVI), 146–166 (GAVA…AFLV), 202–222 (VGVL…KASV), 224–244 (VGYY…YLIL), and 256–276 (QKLL…AAIV).

The protein belongs to the UbiA prenyltransferase family. DGGGP synthase subfamily. Requires Mg(2+) as cofactor.

Its subcellular location is the cell membrane. It catalyses the reaction sn-3-O-(geranylgeranyl)glycerol 1-phosphate + (2E,6E,10E)-geranylgeranyl diphosphate = 2,3-bis-O-(geranylgeranyl)-sn-glycerol 1-phosphate + diphosphate. It participates in membrane lipid metabolism; glycerophospholipid metabolism. Its function is as follows. Prenyltransferase that catalyzes the transfer of the geranylgeranyl moiety of geranylgeranyl diphosphate (GGPP) to the C2 hydroxyl of (S)-3-O-geranylgeranylglyceryl phosphate (GGGP). This reaction is the second ether-bond-formation step in the biosynthesis of archaeal membrane lipids. This chain is Digeranylgeranylglyceryl phosphate synthase, found in Thermococcus onnurineus (strain NA1).